The following is a 389-amino-acid chain: MVTVNEFRKAQRAEGPATVLAIGTATPPNCVDQSAYADYYFRITNSEDKPELKEKFRRMCEKSMINTRYMHLTEDLLKQNPSFCEYMASSLDARQDIVVNEVPKLGKEAALRAIKEWGRPKSKITHLIFCTTSGVDMPGADFRLTKLLGLRPSVKRFMMYQQGCFAGGTVLRLAKDLAENNKNARVLVVCSEITVITFRGPNDTHLDSLVGQALFGDGAGAVIVGSDPVIGIEKPLFEIVSAAQTILPDSDGAIDGHLREVGLTFHLLKDVPGLISKNIRKSLVEAFKPLGISDWNSIFWIAHPGGPAILDQVETELSLKPDKLKSTRQVLRDYGNMSSACVLFILDEMRNASAKDGHRTTGEGLDWGVLFGFGPGLTVETVVLHSVPT.

Cys164 is a catalytic residue.

Belongs to the thiolase-like superfamily. Chalcone/stilbene synthases family.

It catalyses the reaction (E)-4-coumaroyl-CoA + 3 malonyl-CoA + 3 H(+) = 2',4,4',6'-tetrahydroxychalcone + 3 CO2 + 4 CoA. The protein operates within secondary metabolite biosynthesis; flavonoid biosynthesis. Functionally, the primary product of this enzyme is 4,2',4',6'-tetrahydroxychalcone (also termed naringenin-chalcone or chalcone) which can under specific conditions spontaneously isomerize into naringenin. The sequence is that of Chalcone synthase 9 (CHS9) from Daucus carota (Wild carrot).